A 254-amino-acid polypeptide reads, in one-letter code: uncharacterized protein (254 aa).

The first 22 residues, 1–22 (MKRLKKIVLCISFLFLTIFIGG), serve as a signal peptide directing secretion. Cys23 carries the N-palmitoyl cysteine lipid modification. Cys23 carries S-diacylglycerol cysteine lipidation.

The protein belongs to the staphylococcal tandem lipoprotein family.

It is found in the cell membrane. This is an uncharacterized protein from Staphylococcus aureus (strain MSSA476).